The following is a 294-amino-acid chain: Acetylglutamate kinase (294 aa).

Residues 60-61 (GG), R82, and N186 contribute to the substrate site.

This sequence belongs to the acetylglutamate kinase family. ArgB subfamily.

It is found in the cytoplasm. It catalyses the reaction N-acetyl-L-glutamate + ATP = N-acetyl-L-glutamyl 5-phosphate + ADP. It functions in the pathway amino-acid biosynthesis; L-arginine biosynthesis; N(2)-acetyl-L-ornithine from L-glutamate: step 2/4. In terms of biological role, catalyzes the ATP-dependent phosphorylation of N-acetyl-L-glutamate. The polypeptide is Acetylglutamate kinase (Methanospirillum hungatei JF-1 (strain ATCC 27890 / DSM 864 / NBRC 100397 / JF-1)).